The following is a 255-amino-acid chain: MVLEVKNLSFKYSQKLILDKLSFSVPKNSITSILAPNGSGKTTLLKCLLGLLKPLEETEIKACNKDILPLKPYEKAKLIAYIPQVEYYAFNFSVLDFVLMGKATHLNLFAMPKAKHIKEATSVLERLDLESLKDQGINDLSGGQRQMVLLARSLLQRTPLLLLDEPTSALDLKNQALFFDAIKDEMKKRELSVLVNIHDPNLVARHSTHVVMLKDKKLFLQASTPIAMTSHNLSALYDTPLEAIWHDDKLVVYAL.

The 238-residue stretch at 3–240 (LEVKNLSFKY…HNLSALYDTP (238 aa)) folds into the ABC transporter domain. An ATP-binding site is contributed by 35–42 (APNGSGKT).

It belongs to the ABC transporter superfamily.

The protein localises to the cell inner membrane. Its function is as follows. Part of a binding-protein-dependent transport system for an iron chelatin. Probably responsible for energy coupling to the transport system (Potential). This chain is Probable iron chelatin transport ATP-binding protein jhp_0821, found in Helicobacter pylori (strain J99 / ATCC 700824) (Campylobacter pylori J99).